Reading from the N-terminus, the 303-residue chain is Zinc transporter ZIP9 (303 aa).

Residues 7 to 27 (ISLLSLAMLVGCYVSGIIPLA) traverse the membrane as a helical segment. N29 is a glycosylation site (N-linked (GlcNAc...) asparagine). 5 helical membrane passes run 35-55 (LKLV…AVIV), 102-122 (AYIG…DQIG), 142-162 (ITTT…LGAA), 172-192 (LIVF…LVSF), and 206-226 (HLLV…LGLS). N237 carries N-linked (GlcNAc...) asparagine glycosylation. The next 2 membrane-spanning stretches (helical) occupy residues 240 to 260 (GVAM…HVLP) and 282 to 302 (LEVC…IGHQ).

This sequence belongs to the ZIP transporter (TC 2.A.5) family.

The protein resides in the golgi apparatus. It localises to the trans-Golgi network membrane. The protein localises to the cell membrane. Its subcellular location is the cytoplasm. It is found in the perinuclear region. The protein resides in the mitochondrion. It localises to the nucleus. The catalysed reaction is Zn(2+)(in) = Zn(2+)(out). Transports zinc ions across cell and organelle membranes into the cytoplasm and regulates intracellular zinc homeostasis. Participates in the zinc ions efflux out of the secretory compartments. Also functions as a membrane androgen receptor that mediates, through a G protein, the non-classical androgen signaling pathway, characterized by the activation of MAPK3/MAPK1 (Erk1/2) and transcription factors CREB1 or ATF1. Moreover, has dual functions as a membrane-bound androgen receptor and as an androgen-dependent zinc transporter both of which are mediated through an inhibitory G protein (Gi) that mediates both MAP kinase and zinc signaling leading to the androgen-dependent apoptotic process. The protein is Zinc transporter ZIP9 of Xenopus tropicalis (Western clawed frog).